Reading from the N-terminus, the 299-residue chain is MDPAGNPATGTARVKRGMAEMLKGGVIMDVVTPEQARIAEGAGAVAVMALERVPADIRAQGGVSRMSDPDMIEGIIAAVTIPVMAKVRIGHFVEAQILQTLGVDYIDESEVLTPADYAHHIDKWNFTVPFVCGATNLGEALRRISEGAAMIRSKGEAGTGDVSNATTHMRAIGGEIRRLTSMSEDELFVAAKELQAPYELVAEVARAGKLPVTLFTAGGIATPADAAMMMQLGAEGVFVGSGIFKSGAPEHRAAAIVKATTFFDDPDVLAKVSRGLGEAMVGINVDEIAVGHRLAQRGW.

A D-ribose 5-phosphate-binding site is contributed by D29. K86 (schiff-base intermediate with D-ribose 5-phosphate) is an active-site residue. Residue G158 participates in D-ribose 5-phosphate binding. R170 provides a ligand contact to D-glyceraldehyde 3-phosphate. Residues G219 and 240–241 contribute to the D-ribose 5-phosphate site; that span reads GS.

This sequence belongs to the PdxS/SNZ family. In the presence of PdxT, forms a dodecamer of heterodimers.

It catalyses the reaction aldehydo-D-ribose 5-phosphate + D-glyceraldehyde 3-phosphate + L-glutamine = pyridoxal 5'-phosphate + L-glutamate + phosphate + 3 H2O + H(+). Its pathway is cofactor biosynthesis; pyridoxal 5'-phosphate biosynthesis. In terms of biological role, catalyzes the formation of pyridoxal 5'-phosphate from ribose 5-phosphate (RBP), glyceraldehyde 3-phosphate (G3P) and ammonia. The ammonia is provided by the PdxT subunit. Can also use ribulose 5-phosphate and dihydroxyacetone phosphate as substrates, resulting from enzyme-catalyzed isomerization of RBP and G3P, respectively. This Mycobacterium bovis (strain ATCC BAA-935 / AF2122/97) protein is Pyridoxal 5'-phosphate synthase subunit PdxS.